Reading from the N-terminus, the 376-residue chain is MSCPYFEQKSCTSCTHMNTPYSQQLETKDNALRSLFSDVEQSAWLAPVQSDSMHCRNKAKMVALGAAHQPTLGIESVQDGTPISLVHCPLYTQESQELLAYLQEWIRTSGIPPYNKVKKKGELKFVLLTRSQARGEFMLRFVVRSEAALERIRHNLPRLQQAFPAVRVISANIQPIHMARLEGEQEIFLTDAHYLLEEFNGVPMVVRPKSFFQTNPHVAAQLYATARNWVAELKPRQMWDLFCGVGGFALHCAPHAEQVIGIEIEEEAINSAKLSAQQLGIDNLRFSALDSAAYSQAQTQAADLILVNPPRRGLGQALSEQLEQLASQYLIYSSCNPVTMQQDLAHLPSYRVERAQWFDMFPHTDHAEVMMLLVRQ.

[4Fe-4S] cluster-binding residues include Cys3, Cys11, Cys14, and Cys88. The S-adenosyl-L-methionine site is built by Gln213, Phe242, Glu263, and Asn308. Catalysis depends on Cys335, which acts as the Nucleophile.

The protein belongs to the class I-like SAM-binding methyltransferase superfamily. RNA M5U methyltransferase family. RlmC subfamily.

The enzyme catalyses uridine(747) in 23S rRNA + S-adenosyl-L-methionine = 5-methyluridine(747) in 23S rRNA + S-adenosyl-L-homocysteine + H(+). Catalyzes the formation of 5-methyl-uridine at position 747 (m5U747) in 23S rRNA. The sequence is that of 23S rRNA (uracil(747)-C(5))-methyltransferase RlmC from Vibrio vulnificus (strain CMCP6).